A 25-amino-acid chain; its full sequence is Bombinin-like peptide 4 (25 aa).

Phenylalanine amide is present on Phe-25.

Belongs to the bombinin family. As to expression, expressed by the skin glands.

It localises to the secreted. In terms of biological role, has antimicrobial activity, but no hemolytic activity. Preference on killing Gram-negative non-enteric bacteria. This Bombina orientalis (Oriental fire-bellied toad) protein is Bombinin-like peptide 4.